A 76-amino-acid polypeptide reads, in one-letter code: Esculentin-2MT2 (76 aa).

An N-terminal signal peptide occupies residues 1 to 22 (MFTLKKSMLLLFFLGTISLSLC). The propeptide at 23–37 (EEERSADEDDGEKEV) is removed in mature form. Cysteine 70 and cysteine 76 are joined by a disulfide.

Belongs to the frog skin active peptide (FSAP) family. Esculentin subfamily. In terms of tissue distribution, expressed by the skin glands.

It is found in the secreted. Its function is as follows. Antimicrobial peptide. Active against a variety of Gram-negative and Gram-positive bacterial strains. Active against fungi. Shows strong hemolytic activity against human erythrocytes. This chain is Esculentin-2MT2, found in Amolops mantzorum (Sichuan torrent frog).